Reading from the N-terminus, the 586-residue chain is Probable transporter AQR1 (586 aa).

Disordered regions lie at residues 1–44 (MSRS…FEGA) and 61–82 (EGDLDSETSSHSSDDKVDPTQQ). Topologically, residues 1-99 (MSRSNSIYTE…PYTLLSYGQK (99 aa)) are extracellular. Residues 19–40 (NEQHLTREYTKPDGQTKSEKLN) show a composition bias toward basic and acidic residues. Residues 100–120 (WGMVAILTMCGFWSSLGSPIY) traverse the membrane as a helical segment. Topologically, residues 121–139 (YPALRQLEKQFNVDENMVN) are cytoplasmic. A helical membrane pass occupies residues 140–160 (VTVVVYLLFQGISPTVSGGLA). Topologically, residues 161–166 (DCFGRR) are extracellular. A helical membrane pass occupies residues 167–187 (PIILAGMLIYVIASIGLACAP). A topological domain (cytoplasmic) is located at residue S188. A helical transmembrane segment spans residues 189–209 (YGVIIFLRCIQSIGISPTIAI). Over 210–225 (SSGVVGDFTLKHERGT) the chain is Extracellular. Residues 226–246 (FVGATSGFVLLGQCFGSLIGA) form a helical membrane-spanning segment. Topologically, residues 247-255 (VLTARWDWR) are cytoplasmic. The helical transmembrane segment at 256–276 (AIFWFLTIGCGSCFLIAFLIL) threads the bilayer. Over 277–334 (PETKRTIAGNLSIKPKRFINRAPIFLLGPVRRRFKYDNPDYETLDPTIPKLDLSSAGK) the chain is Extracellular. The helical transmembrane segment at 335-355 (ILVLPEIILSLFPSGLLFAMW) threads the bilayer. Topologically, residues 356–374 (TLMLSSISSGLSVAPYNYH) are cytoplasmic. The helical transmembrane segment at 375–395 (LVIIGVCYLPGGIGGLMGSFF) threads the bilayer. The Extracellular segment spans residues 396–433 (TGRIIDMYFKRKIKKFEQDKANGLIPQDAEINMFKVRL). The helical transmembrane segment at 434-454 (VCLLPQNFLAVVAYLLFGWSI) threads the bilayer. Topologically, residues 455–459 (DKGWR) are cytoplasmic. Residues 460-480 (IESILITSFVCSYCAMSTLST) traverse the membrane as a helical segment. Over 481-523 (STTLLVDLYPTKSSTASSCFNFVRCSLSTIFMGCFAKMKAAMT) the chain is Extracellular. The helical transmembrane segment at 524-544 (VGGTFTFLCALVFFFNFLMFI) threads the bilayer. Topologically, residues 545-586 (PMKYGMKWREDRLLKQQRQSWLNTLAVKAKKGTKRDQNDNHN) are cytoplasmic.

The protein belongs to the major facilitator superfamily. CAR1 family.

The protein resides in the membrane. Its function is as follows. Probable transporter that confers resistance to short-chain monocarboxylic acids and quinidine. In Saccharomyces cerevisiae (strain ATCC 204508 / S288c) (Baker's yeast), this protein is Probable transporter AQR1 (AQR1).